A 554-amino-acid chain; its full sequence is Glutamine--tRNA ligase (554 aa).

The short motif at 34-44 is the 'HIGH' region element; that stretch reads PEPNGYLHIGH. ATP contacts are provided by residues 35-37 and 41-47; these read EPN and HIGHAKS. Positions 67 and 212 each coordinate L-glutamine. ATP-binding positions include Thr-231, 261-262, and 269-271; these read RL and MSK. The short motif at 268–272 is the 'KMSKS' region element; sequence VMSKR.

The protein belongs to the class-I aminoacyl-tRNA synthetase family. Monomer.

The protein localises to the cytoplasm. It catalyses the reaction tRNA(Gln) + L-glutamine + ATP = L-glutaminyl-tRNA(Gln) + AMP + diphosphate. The chain is Glutamine--tRNA ligase from Shigella boydii serotype 4 (strain Sb227).